Here is a 571-residue protein sequence, read N- to C-terminus: Medium/long-chain-fatty-acid--CoA ligase FadD8 (571 aa).

Residues 1–22 (MSTAGDDAVGVPPACGGRSDAV) form a disordered region.

It belongs to the ATP-dependent AMP-binding enzyme family.

It catalyses the reaction a medium-chain fatty acid + ATP + CoA = a medium-chain fatty acyl-CoA + AMP + diphosphate. The enzyme catalyses a long-chain fatty acid + ATP + CoA = a long-chain fatty acyl-CoA + AMP + diphosphate. The catalysed reaction is hexanoate + ATP + CoA = hexanoyl-CoA + AMP + diphosphate. It carries out the reaction dodecanoate + ATP + CoA = dodecanoyl-CoA + AMP + diphosphate. It catalyses the reaction hexadecanoate + ATP + CoA = hexadecanoyl-CoA + AMP + diphosphate. It functions in the pathway lipid metabolism; fatty acid metabolism. Functionally, catalyzes the activation of medium/long-chain fatty acids as acyl-coenzyme A (acyl-CoA). This Mycobacterium tuberculosis (strain ATCC 25618 / H37Rv) protein is Medium/long-chain-fatty-acid--CoA ligase FadD8.